We begin with the raw amino-acid sequence, 142 residues long: Peptide methionine sulfoxide reductase MsrB (142 aa).

Positions 2-125 (IKKNKNDLNE…NSAAVQFIPY (124 aa)) constitute a MsrB domain. The active-site Nucleophile is the C114.

This sequence belongs to the MsrB Met sulfoxide reductase family.

It catalyses the reaction L-methionyl-[protein] + [thioredoxin]-disulfide + H2O = L-methionyl-(R)-S-oxide-[protein] + [thioredoxin]-dithiol. This Staphylococcus saprophyticus subsp. saprophyticus (strain ATCC 15305 / DSM 20229 / NCIMB 8711 / NCTC 7292 / S-41) protein is Peptide methionine sulfoxide reductase MsrB.